The sequence spans 101 residues: Floral defensin-like protein 2 (101 aa).

Positions 1-25 are cleaved as a signal peptide; that stretch reads MARSICFFAVAILALMLFAAYETEA. Disulfide bonds link cysteine 28–cysteine 74, cysteine 32–cysteine 48, cysteine 39–cysteine 61, cysteine 45–cysteine 68, and cysteine 49–cysteine 70. A propeptide spans 75–101 (removed in mature form); it reads ATEEATATLANEVKTMAEALVEEDMME.

The protein belongs to the DEFL family. In terms of processing, when compared to other plant defensins, the petunia defensins have an additional fifth disulfide bond. As to expression, petals.

The protein localises to the secreted. The protein resides in the vacuole. Plant defense peptide with antifungal activity against F.oxysporum and B.cinerea. The protein is Floral defensin-like protein 2 (D2) of Petunia hybrida (Petunia).